A 535-amino-acid polypeptide reads, in one-letter code: CTP synthase (535 aa).

The amidoligase domain stretch occupies residues 1-266 (MKTKFIFITG…DERVVEKLNI (266 aa)). A CTP-binding site is contributed by Ser-14. Ser-14 contacts UTP. ATP is bound by residues 15–20 (SIGKGL) and Asp-72. Mg(2+) contacts are provided by Asp-72 and Glu-140. CTP contacts are provided by residues 147–149 (DIE), 187–192 (KTKPTQ), and Lys-223. Residues 187–192 (KTKPTQ) and Lys-223 each bind UTP. Residues 292–534 (RIAIVGKYVN…VRAALIQRDA (243 aa)) form the Glutamine amidotransferase type-1 domain. Gly-354 contacts L-glutamine. Cys-381 serves as the catalytic Nucleophile; for glutamine hydrolysis. Residues 382 to 385 (LGMQ), Glu-405, and Arg-462 contribute to the L-glutamine site. Catalysis depends on residues His-507 and Glu-509.

The protein belongs to the CTP synthase family. Homotetramer.

It catalyses the reaction UTP + L-glutamine + ATP + H2O = CTP + L-glutamate + ADP + phosphate + 2 H(+). The enzyme catalyses L-glutamine + H2O = L-glutamate + NH4(+). It carries out the reaction UTP + NH4(+) + ATP = CTP + ADP + phosphate + 2 H(+). It participates in pyrimidine metabolism; CTP biosynthesis via de novo pathway; CTP from UDP: step 2/2. Allosterically activated by GTP, when glutamine is the substrate; GTP has no effect on the reaction when ammonia is the substrate. The allosteric effector GTP functions by stabilizing the protein conformation that binds the tetrahedral intermediate(s) formed during glutamine hydrolysis. Inhibited by the product CTP, via allosteric rather than competitive inhibition. Its function is as follows. Catalyzes the ATP-dependent amination of UTP to CTP with either L-glutamine or ammonia as the source of nitrogen. Regulates intracellular CTP levels through interactions with the four ribonucleotide triphosphates. The protein is CTP synthase of Pelobacter propionicus (strain DSM 2379 / NBRC 103807 / OttBd1).